The chain runs to 342 residues: uncharacterized protein (342 aa).

Belongs to the cycloisomerase 2 family.

This is an uncharacterized protein from Staphylococcus aureus (strain MSSA476).